Reading from the N-terminus, the 931-residue chain is NEDD4-binding protein 1 (931 aa).

In terms of domain architecture, KH-like spans 75-159 (GKAVRSAKEY…VQQFVKLFEN (85 aa)). 3 disordered regions span residues 289–329 (MTSK…HNDS), 413–474 (QEWS…TQVD), and 547–571 (CTSA…NSHS). 2 stretches are compositionally biased toward basic and acidic residues: residues 290–309 (TSKE…ESLP) and 319–329 (QEVKSVSHNDS). Polar residues predominate over residues 416–434 (SSKTPKTTNLRLGSNANSS). Basic and acidic residues-rich tracts occupy residues 435 to 444 (HKLEDEDISC) and 456 to 467 (NETRTERHKARD). The segment covering 547 to 557 (CTSAKSKTAVH) has biased composition (polar residues). An RNase NYN domain is found at 659-811 (LKHIIIDGSN…LGRNGPRLDD (153 aa)). The segment at 841-863 (LFMHVPNPASSSQQPKNRAHGDH) is disordered. The tract at residues 884–931 (RSASETVWLREALIKIFPDYEQRQKIDKILADHPFMRDLNALSAMVLD) is coCUN.

Belongs to the N4BP1 family.

Its subcellular location is the cytoplasm. The protein localises to the cytosol. The protein resides in the nucleus. It localises to the nucleolus. It is found in the PML body. Functionally, potent suppressor of cytokine production that acts as a regulator of innate immune signaling and inflammation. Acts as a key negative regulator of select cytokine and chemokine responses elicited by TRIF-independent Toll-like receptors (TLRs), thereby limiting inflammatory cytokine responses to minor insults. Has ribonuclease activity. This is NEDD4-binding protein 1 from Gallus gallus (Chicken).